A 690-amino-acid chain; its full sequence is Calpain-9 (690 aa).

Positions 1–24 (MPYLHRSLRPQPQPVPRDARTVHS) are disordered. The Calpain catalytic domain maps to 42–337 (LFEDADFPAS…FDKVEICNLT (296 aa)). Residues Leu81, Gly83, and Asp88 each contribute to the Ca(2+) site. Residue Cys97 is part of the active site. Glu167 contributes to the Ca(2+) binding site. Active-site residues include His254 and Asn278. Glu284, Asp291, Leu312, Asp314, and Glu316 together coordinate Ca(2+). The tract at residues 338-521 (PDALEDNTLH…PQEEETEEER (184 aa)) is domain III. Residues 522-690 (QFRALFRRIA…NEFINLTMNI (169 aa)) form a domain IV region. 3 consecutive EF-hand domains span residues 534-552 (DMEVSAEELEYVLNAVLQK), 561-589 (LSLLSCRNIISLMDTSGNGKMEFEEFRVF), and 591-626 (DKLRYWMDLFLQFDVDKSGTMSSYELRTALKAAGFQ). Ca(2+) contacts are provided by Asp574, Ser576, Asn578, Lys580, Glu585, Asp604, Asp606, Ser608, Thr610, and Glu615.

This sequence belongs to the peptidase C2 family. Predominantly expressed in stomach and small intestine, although low levels of expression in other organs.

In terms of biological role, calcium-regulated non-lysosomal thiol-protease. This Rattus norvegicus (Rat) protein is Calpain-9 (Capn9).